Here is a 267-residue protein sequence, read N- to C-terminus: Collectin-11 (267 aa).

The first 21 residues, 1–21, serve as a signal peptide directing secretion; the sequence is MKRALALMGLAFLCVLRAGAA. Residues 40-109 form a disordered region; that stretch reads GDAGEKGDKG…GPNGEPGIPC (70 aa). Composition is skewed to basic and acidic residues over residues 41-50 and 62-71; these read DAGEKGDKGA and EKGDVGDKGQ. Residues 49–108 enclose the Collagen-like domain; that stretch reads GAPGRPGRVGPTGEKGDVGDKGQKGGVGRHGKIGPIGSKGEKGDSGDIGPPGPNGEPGIP. A coiled-coil region spans residues 110–144; the sequence is ECSQLRKAIGEMDNQVTQLTAELKFIKNAVAGVRE. In terms of domain architecture, C-type lectin spans 145–261; it reads TEQKMYLLVK…CHLTMHFLCE (117 aa). Intrachain disulfides connect cysteine 166-cysteine 260 and cysteine 238-cysteine 252. A carbohydrate is bound at residue arginine 196. Positions 203, 207, 228, 230, 231, 234, 236, and 237 each coordinate Ca(2+). Glutamate 236 lines the a carbohydrate pocket. A carbohydrate-binding positions include glutamate 240 and 248–250; that span reads NDV. 2 residues coordinate Ca(2+): asparagine 248 and aspartate 249.

The protein belongs to the COLEC10/COLEC11 family. In terms of assembly, homotrimer; disulfide-linked. Interacts with MASP1; probably triggers the lectin pathway of complement.

The protein localises to the secreted. Functionally, lectin that plays a role in innate immunity, apoptosis and embryogenesis. Calcium-dependent lectin that binds self and non-self glycoproteins presenting high mannose oligosaccharides with at least one terminal alpha-1,2-linked mannose epitope. Primarily recognizes the terminal disaccharide of the glycan. Also recognizes a subset of fucosylated glycans and lipopolysaccharides. Plays a role in innate immunity through its ability to bind non-self sugars presented by microorganisms and to activate the complement through the recruitment of MAPS1. Also plays a role in apoptosis through its ability to bind in a calcium-independent manner the DNA present at the surface of apoptotic cells and to activate the complement in response to this binding. Finally, plays a role in development, probably serving as a guidance cue during the migration of neural crest cells and other cell types during embryogenesis. The protein is Collectin-11 (COLEC11) of Bos taurus (Bovine).